The chain runs to 524 residues: Cytochrome P450 CYP749A22 (524 aa).

The helical transmembrane segment at 12 to 32 (TPILFQFLLSSLCVFLLFVFI) threads the bilayer. Heme is bound at residue C472.

This sequence belongs to the cytochrome P450 family. Heme serves as cofactor.

The protein resides in the membrane. Functionally, probable heme-thiolate monooxygenase. The protein is Cytochrome P450 CYP749A22 of Panax ginseng (Korean ginseng).